The following is a 238-amino-acid chain: Pyridoxine 5'-phosphate synthase (238 aa).

Residue Asn-7 participates in 3-amino-2-oxopropyl phosphate binding. Residue 9-10 (DH) coordinates 1-deoxy-D-xylulose 5-phosphate. Arg-18 contacts 3-amino-2-oxopropyl phosphate. His-43 functions as the Proton acceptor in the catalytic mechanism. Residues Arg-45 and His-50 each contribute to the 1-deoxy-D-xylulose 5-phosphate site. Glu-70 acts as the Proton acceptor in catalysis. Position 100 (Thr-100) interacts with 1-deoxy-D-xylulose 5-phosphate. The active-site Proton donor is His-190. 3-amino-2-oxopropyl phosphate contacts are provided by residues Gly-191 and 212 to 213 (GH).

Belongs to the PNP synthase family. As to quaternary structure, homooctamer; tetramer of dimers.

It is found in the cytoplasm. The catalysed reaction is 3-amino-2-oxopropyl phosphate + 1-deoxy-D-xylulose 5-phosphate = pyridoxine 5'-phosphate + phosphate + 2 H2O + H(+). It functions in the pathway cofactor biosynthesis; pyridoxine 5'-phosphate biosynthesis; pyridoxine 5'-phosphate from D-erythrose 4-phosphate: step 5/5. Its function is as follows. Catalyzes the complicated ring closure reaction between the two acyclic compounds 1-deoxy-D-xylulose-5-phosphate (DXP) and 3-amino-2-oxopropyl phosphate (1-amino-acetone-3-phosphate or AAP) to form pyridoxine 5'-phosphate (PNP) and inorganic phosphate. This is Pyridoxine 5'-phosphate synthase from Prochlorococcus marinus subsp. pastoris (strain CCMP1986 / NIES-2087 / MED4).